Here is a 256-residue protein sequence, read N- to C-terminus: Thiazole synthase (256 aa).

The active-site Schiff-base intermediate with DXP is the Lys95. Residues Gly156, 182–183 (AG), and 204–205 (NT) contribute to the 1-deoxy-D-xylulose 5-phosphate site.

It belongs to the ThiG family. Homotetramer. Forms heterodimers with either ThiH or ThiS.

The protein localises to the cytoplasm. It carries out the reaction [ThiS sulfur-carrier protein]-C-terminal-Gly-aminoethanethioate + 2-iminoacetate + 1-deoxy-D-xylulose 5-phosphate = [ThiS sulfur-carrier protein]-C-terminal Gly-Gly + 2-[(2R,5Z)-2-carboxy-4-methylthiazol-5(2H)-ylidene]ethyl phosphate + 2 H2O + H(+). The protein operates within cofactor biosynthesis; thiamine diphosphate biosynthesis. Catalyzes the rearrangement of 1-deoxy-D-xylulose 5-phosphate (DXP) to produce the thiazole phosphate moiety of thiamine. Sulfur is provided by the thiocarboxylate moiety of the carrier protein ThiS. In vitro, sulfur can be provided by H(2)S. The chain is Thiazole synthase from Citrobacter koseri (strain ATCC BAA-895 / CDC 4225-83 / SGSC4696).